We begin with the raw amino-acid sequence, 238 residues long: Accessory gene regulator A (238 aa).

The Response regulatory domain occupies 2 to 125 (KIFICEDDPK…LRTRIIDCLE (124 aa)). Asp59 carries the 4-aspartylphosphate modification. One can recognise an HTH LytTR-type domain in the interval 143–238 (IELKRGSNSV…YASVRNVKKI (96 aa)).

It is found in the cytoplasm. Required for high-level post-exponential phase expression of a series of secreted proteins. This is Accessory gene regulator A (agrA) from Staphylococcus aureus (strain COL).